Consider the following 118-residue polypeptide: NADH-quinone oxidoreductase subunit A 2 (118 aa).

3 consecutive transmembrane segments (helical) span residues 5–25 (YLPI…SLIF), 62–82 (IIAM…PWAV), and 87–107 (LGMF…VGYI).

The protein belongs to the complex I subunit 3 family. As to quaternary structure, NDH-1 is composed of 14 different subunits. Subunits NuoA, H, J, K, L, M, N constitute the membrane sector of the complex.

It is found in the cell inner membrane. The enzyme catalyses a quinone + NADH + 5 H(+)(in) = a quinol + NAD(+) + 4 H(+)(out). Its function is as follows. NDH-1 shuttles electrons from NADH, via FMN and iron-sulfur (Fe-S) centers, to quinones in the respiratory chain. The immediate electron acceptor for the enzyme in this species is believed to be ubiquinone. Couples the redox reaction to proton translocation (for every two electrons transferred, four hydrogen ions are translocated across the cytoplasmic membrane), and thus conserves the redox energy in a proton gradient. This is NADH-quinone oxidoreductase subunit A 2 from Geotalea uraniireducens (strain Rf4) (Geobacter uraniireducens).